Here is a 305-residue protein sequence, read N- to C-terminus: Ribosomal protein L11 methyltransferase (305 aa).

Positions 149, 176, 198, and 240 each coordinate S-adenosyl-L-methionine.

It belongs to the methyltransferase superfamily. PrmA family.

It localises to the cytoplasm. The enzyme catalyses L-lysyl-[protein] + 3 S-adenosyl-L-methionine = N(6),N(6),N(6)-trimethyl-L-lysyl-[protein] + 3 S-adenosyl-L-homocysteine + 3 H(+). Functionally, methylates ribosomal protein L11. The chain is Ribosomal protein L11 methyltransferase from Trichlorobacter lovleyi (strain ATCC BAA-1151 / DSM 17278 / SZ) (Geobacter lovleyi).